Consider the following 34-residue polypeptide: Photosystem II reaction center protein M (34 aa).

Residues 5–25 (ILAFIATALFILVPTSFLLII) traverse the membrane as a helical segment.

It belongs to the PsbM family. In terms of assembly, PSII is composed of 1 copy each of membrane proteins PsbA, PsbB, PsbC, PsbD, PsbE, PsbF, PsbH, PsbI, PsbJ, PsbK, PsbL, PsbM, PsbT, PsbX, PsbY, PsbZ, Psb30/Ycf12, at least 3 peripheral proteins of the oxygen-evolving complex and a large number of cofactors. It forms dimeric complexes.

The protein localises to the plastid. It is found in the chloroplast thylakoid membrane. In terms of biological role, one of the components of the core complex of photosystem II (PSII). PSII is a light-driven water:plastoquinone oxidoreductase that uses light energy to abstract electrons from H(2)O, generating O(2) and a proton gradient subsequently used for ATP formation. It consists of a core antenna complex that captures photons, and an electron transfer chain that converts photonic excitation into a charge separation. This subunit is found at the monomer-monomer interface. In Triticum aestivum (Wheat), this protein is Photosystem II reaction center protein M.